A 1401-amino-acid polypeptide reads, in one-letter code: Kinesin-like protein KIF27 (1401 aa).

One can recognise a Kinesin motor domain in the interval 5 to 341 (PVKVAVRIRP…LKYANRARNI (337 aa)). Residue 84-91 (GQTGSGKT) coordinates ATP. Coiled-coil stretches lie at residues 352–413 (ESDR…GYQC) and 489–557 (LAAD…KLNL). 5 positions are modified to phosphoserine: S643, S646, S672, S675, and S704. Positions 643–662 (SDNSDDEESEGQEKSGTRCR) are disordered. 4 coiled-coil regions span residues 705-886 (QELN…IQLK), 916-1070 (DHLQ…AAIE), 1118-1154 (NKVV…LESA), and 1190-1219 (EGIM…TSRD). S999 carries the post-translational modification Phosphoserine. The segment covering 1259–1280 (EELKWASRPESMKLSGREREMD) has biased composition (basic and acidic residues). Residues 1259–1332 (EELKWASRPE…TETDDNQFTK (74 aa)) form a disordered region. Over residues 1281–1292 (SSASSLRTQPNP) the composition is skewed to polar residues. 2 positions are modified to phosphoserine: S1367 and S1389.

It belongs to the TRAFAC class myosin-kinesin ATPase superfamily. Kinesin family. KIF27 subfamily. In terms of assembly, interacts with STK36. As to expression, testis, pancreatic islet, germ cell tumors and Jurkat T-cells.

The protein resides in the cytoplasm. It localises to the cytoskeleton. The protein localises to the cell projection. Its subcellular location is the cilium. In terms of biological role, plays an essential role in motile ciliogenesis. The sequence is that of Kinesin-like protein KIF27 (KIF27) from Homo sapiens (Human).